Here is a 267-residue protein sequence, read N- to C-terminus: Acyl-[acyl-carrier-protein]--UDP-N-acetylglucosamine O-acyltransferase (267 aa).

It belongs to the transferase hexapeptide repeat family. LpxA subfamily. As to quaternary structure, homotrimer.

The protein resides in the cytoplasm. It catalyses the reaction a (3R)-hydroxyacyl-[ACP] + UDP-N-acetyl-alpha-D-glucosamine = a UDP-3-O-[(3R)-3-hydroxyacyl]-N-acetyl-alpha-D-glucosamine + holo-[ACP]. It participates in glycolipid biosynthesis; lipid IV(A) biosynthesis; lipid IV(A) from (3R)-3-hydroxytetradecanoyl-[acyl-carrier-protein] and UDP-N-acetyl-alpha-D-glucosamine: step 1/6. In terms of biological role, involved in the biosynthesis of lipid A, a phosphorylated glycolipid that anchors the lipopolysaccharide to the outer membrane of the cell. The sequence is that of Acyl-[acyl-carrier-protein]--UDP-N-acetylglucosamine O-acyltransferase from Cupriavidus necator (strain ATCC 17699 / DSM 428 / KCTC 22496 / NCIMB 10442 / H16 / Stanier 337) (Ralstonia eutropha).